A 375-amino-acid chain; its full sequence is Probable UDP-N-acetylglucosamine 2-epimerase (375 aa).

Belongs to the UDP-N-acetylglucosamine 2-epimerase family.

The protein resides in the cytoplasm. The catalysed reaction is UDP-N-acetyl-alpha-D-glucosamine = UDP-N-acetyl-alpha-D-mannosamine. The protein operates within glycan metabolism; exopolysaccharide EPS I biosynthesis. May be involved in synthesis of N-acetyltrideoxygalactose, a component of exopolysaccharide EPS I which functions as a virulence factor. This chain is Probable UDP-N-acetylglucosamine 2-epimerase (epsC), found in Ralstonia solanacearum (Pseudomonas solanacearum).